The primary structure comprises 467 residues: Glutamine synthetase (467 aa).

The region spanning 14 to 98 (EEVEYVDIRF…VHCNVVEPDT (85 aa)) is the GS beta-grasp domain. A GS catalytic domain is found at 106–467 (PRGAAVKAEA…PVEYQMYYSC (362 aa)). Glutamate 131 and glutamate 133 together coordinate Mg(2+). Position 209 (aspartate 209) interacts with ATP. Mg(2+) contacts are provided by glutamate 214 and glutamate 221. L-glutamate is bound by residues 265–266 (NG) and glycine 266. Histidine 270 contributes to the Mg(2+) binding site. ATP contacts are provided by residues 272–274 (NMS) and serine 274. 3 residues coordinate L-glutamate: arginine 320, glutamate 326, and arginine 338. ATP is bound by residues arginine 338 and arginine 343. Glutamate 356 contacts Mg(2+). Arginine 358 is an L-glutamate binding site. Tyrosine 396 is subject to O-AMP-tyrosine.

Belongs to the glutamine synthetase family. As to quaternary structure, oligomer of 12 subunits arranged in the form of two hexameric ring. Mg(2+) serves as cofactor.

The protein resides in the cytoplasm. The enzyme catalyses L-glutamate + NH4(+) + ATP = L-glutamine + ADP + phosphate + H(+). The activity of this enzyme could be controlled by adenylation under conditions of abundant glutamine. Its function is as follows. Catalyzes the ATP-dependent biosynthesis of glutamine from glutamate and ammonia. The chain is Glutamine synthetase from Cereibacter sphaeroides (Rhodobacter sphaeroides).